A 133-amino-acid chain; its full sequence is uncharacterized protein (133 aa).

This is an uncharacterized protein from Saccharomyces cerevisiae (strain ATCC 204508 / S288c) (Baker's yeast).